Consider the following 311-residue polypeptide: CARD domain-containing protein E10 (311 aa).

The CARD domain occupies Ile-21–Ala-110. Disordered regions lie at residues Glu-125 to Tyr-181, Gly-203 to Asp-230, and Ile-243 to Cys-311. Over residues Glu-140–Asn-152 the composition is skewed to polar residues. Positions Ser-252–Gly-272 are enriched in gly residues.

The protein localises to the host cell membrane. Its function is as follows. Activates host NF-kappa-B and JNK pathways. Induces hyperphosphorylation and redistribution of host bcl-10 from the cytoplasm to the plasma membrane. The inhibitory effect of cellular bcl-10 on NF-kappa-B pathway is then overcome allowing NF-kappa-B activation. In Equus caballus (Horse), this protein is CARD domain-containing protein E10 (E10).